The primary structure comprises 261 residues: Pantothenate synthetase (261 aa).

Residue 29–36 (MGALHNGH) coordinates ATP. Catalysis depends on H36, which acts as the Proton donor. A (R)-pantoate-binding site is contributed by Q60. Q60 contributes to the beta-alanine binding site. 147-150 (GEKD) lines the ATP pocket. Q153 is a binding site for (R)-pantoate. An ATP-binding site is contributed by 184–187 (LSSR).

This sequence belongs to the pantothenate synthetase family. As to quaternary structure, homodimer.

Its subcellular location is the cytoplasm. The catalysed reaction is (R)-pantoate + beta-alanine + ATP = (R)-pantothenate + AMP + diphosphate + H(+). It functions in the pathway cofactor biosynthesis; (R)-pantothenate biosynthesis; (R)-pantothenate from (R)-pantoate and beta-alanine: step 1/1. In terms of biological role, catalyzes the condensation of pantoate with beta-alanine in an ATP-dependent reaction via a pantoyl-adenylate intermediate. This is Pantothenate synthetase from Francisella tularensis subsp. novicida (strain U112).